The following is a 277-amino-acid chain: NH(3)-dependent NAD(+) synthetase (277 aa).

46-53 (GISGGQDS) is an ATP binding site. Asp-52 provides a ligand contact to Mg(2+). A deamido-NAD(+)-binding site is contributed by Arg-141. Position 161 (Thr-161) interacts with ATP. Glu-166 is a binding site for Mg(2+). The deamido-NAD(+) site is built by Lys-174 and Asp-181. 2 residues coordinate ATP: Lys-190 and Thr-212. 262 to 263 (HK) is a deamido-NAD(+) binding site.

Belongs to the NAD synthetase family. As to quaternary structure, homodimer.

It carries out the reaction deamido-NAD(+) + NH4(+) + ATP = AMP + diphosphate + NAD(+) + H(+). Its pathway is cofactor biosynthesis; NAD(+) biosynthesis; NAD(+) from deamido-NAD(+) (ammonia route): step 1/1. Its function is as follows. Catalyzes the ATP-dependent amidation of deamido-NAD to form NAD. Uses ammonia as a nitrogen source. The sequence is that of NH(3)-dependent NAD(+) synthetase from Corynebacterium efficiens (strain DSM 44549 / YS-314 / AJ 12310 / JCM 11189 / NBRC 100395).